The following is a 210-amino-acid chain: Orotate phosphoribosyltransferase (210 aa).

5-phospho-alpha-D-ribose 1-diphosphate is bound by residues Arg96, Lys100, His102, and 122-130; that span reads EDLISTGGS. Ser126 is an orotate binding site.

The protein belongs to the purine/pyrimidine phosphoribosyltransferase family. PyrE subfamily. As to quaternary structure, homodimer. It depends on Mg(2+) as a cofactor.

It carries out the reaction orotidine 5'-phosphate + diphosphate = orotate + 5-phospho-alpha-D-ribose 1-diphosphate. It functions in the pathway pyrimidine metabolism; UMP biosynthesis via de novo pathway; UMP from orotate: step 1/2. Its function is as follows. Catalyzes the transfer of a ribosyl phosphate group from 5-phosphoribose 1-diphosphate to orotate, leading to the formation of orotidine monophosphate (OMP). The sequence is that of Orotate phosphoribosyltransferase (pyrE) from Streptococcus pneumoniae serotype 19F (strain G54).